We begin with the raw amino-acid sequence, 37 residues long: Large ribosomal subunit protein bL36 (37 aa).

This sequence belongs to the bacterial ribosomal protein bL36 family.

This chain is Large ribosomal subunit protein bL36, found in Rhodococcus erythropolis (strain PR4 / NBRC 100887).